A 287-amino-acid chain; its full sequence is MAKDVEAVPGEGFQTRDYQDPPPAPFIDGAELKKWSFYRAVIAEFVATLLFLYITVLTVIGYKIQSDTDAGGVDCGGVGILGIAWAFGGMIFILVYCTAGISGGHINPAVTFGLFLARKVSLPRALLYIIAQCLGAICGVGFVKAFQSSYYTRYGGGANSLADGYSTGTGLAAEIIGTFVLVYTVFSATDPKRSARDSHVPVLAPLPIGFAVFMVHLATIPITGTGINPARSFGAAVIYNKSKPWDDHWIFWVGPFIGAAIAAFYHQFVLRASGSKSLGSFRSAANV.

Position 1 is an N-acetylmethionine (Met-1). Residues 2–39 (AKDVEAVPGEGFQTRDYQDPPPAPFIDGAELKKWSFYR) are Cytoplasmic-facing. The residue at position 3 (Lys-3) is an N6,N6-dimethyllysine; partial. A helical membrane pass occupies residues 40–60 (AVIAEFVATLLFLYITVLTVI). Topologically, residues 61–83 (GYKIQSDTDAGGVDCGGVGILGI) are extracellular. The chain crosses the membrane as a helical span at residues 84–104 (AWAFGGMIFILVYCTAGISGG). The Cytoplasmic segment spans residues 105–125 (HINPAVTFGLFLARKVSLPRA). Residues 107 to 109 (NPA) carry the NPA 1 motif. Residues 126 to 146 (LLYIIAQCLGAICGVGFVKAF) traverse the membrane as a helical segment. The Extracellular segment spans residues 147-167 (QSSYYTRYGGGANSLADGYST). A helical membrane pass occupies residues 168–188 (GTGLAAEIIGTFVLVYTVFSA). The Cytoplasmic segment spans residues 189–201 (TDPKRSARDSHVP). A helical membrane pass occupies residues 202-222 (VLAPLPIGFAVFMVHLATIPI). At 223 to 249 (TGTGINPARSFGAAVIYNKSKPWDDHW) the chain is on the extracellular side. The NPA 2 motif lies at 228 to 230 (NPA). Residues 250–270 (IFWVGPFIGAAIAAFYHQFVL) form a helical membrane-spanning segment. At 271-287 (RASGSKSLGSFRSAANV) the chain is on the cytoplasmic side. Phosphoserine is present on residues Ser-280 and Ser-283.

It belongs to the MIP/aquaporin (TC 1.A.8) family. PIP (TC 1.A.8.11) subfamily. Post-translationally, ubiquitinated by RMA1, leading to proteasomal degradation. In terms of processing, the phosphorylation at Ser-280 and Ser-283 is altered by salt (NaCl) and hydrogen peroxide H(2)O(2) treatments. Phosphorylation of Ser-283 is required for plasma membrane targeting. As to expression, predominantly expressed in roots and green siliques. Also expressed at lower level above ground and in flower buds.

It is found in the cell membrane. Water channel required to facilitate the transport of water across cell membrane. Probably involved in root water uptake. Its function is impaired by Hg(2+). This Arabidopsis thaliana (Mouse-ear cress) protein is Aquaporin PIP2-1 (PIP2-1).